The primary structure comprises 113 residues: Nitrogenase-stabilizing/protective protein NifW (113 aa).

The protein belongs to the NifW family. As to quaternary structure, homotrimer; associates with NifD.

In terms of biological role, may protect the nitrogenase Fe-Mo protein from oxidative damage. This chain is Nitrogenase-stabilizing/protective protein NifW, found in Dechloromonas aromatica (strain RCB).